The chain runs to 525 residues: Penton protein (525 aa).

The segment at 1 to 47 is disordered; the sequence is MWGLQPPTSIPPPPPPTELTPSTYPAMVNGYPPPAASAQSCSSSGGQ. Residues 8–18 show a composition bias toward pro residues; sequence TSIPPPPPPTE. Positions 36–47 are enriched in low complexity; sequence ASAQSCSSSGGQ.

This sequence belongs to the adenoviridae penton family. In terms of assembly, interacts with the fiber protein (via N-terminal tail region). Interacts with the capsid vertex protein; this interaction binds the penton base to neighboring peripentonal hexons.

Its subcellular location is the virion. It is found in the host nucleus. Major capsid protein that self-associates to form penton base pentamers, each in the shape of a pentagon, situated at the 12 vertices of the pseudo T=25 capsid. Involved in virus secondary attachment to host cell after initial attachment by the fiber protein, and in endocytosis of virions. As the virus enters the host cell, penton proteins are shed concomitant with virion acidification in the endosome. The sequence is that of Penton protein from Galliformes (FAdV-10).